Reading from the N-terminus, the 77-residue chain is U9-lycotoxin-Ls1a (77 aa).

Positions 1 to 20 (MKLLLFTALVLVVIVSLIEA) are cleaved as a signal peptide. A propeptide spanning residues 21–26 (EAENER) is cleaved from the precursor.

Belongs to the neurotoxin 19 (CSTX) family. 08 (U8-Lctx) subfamily. Contains 4 disulfide bonds. As to expression, expressed by the venom gland.

It is found in the secreted. This Lycosa singoriensis (Wolf spider) protein is U9-lycotoxin-Ls1a.